Consider the following 617-residue polypeptide: Dihydroxy-acid dehydratase (617 aa).

Asp-81 contacts Mg(2+). A [2Fe-2S] cluster-binding site is contributed by Cys-122. Asp-123 and Lys-124 together coordinate Mg(2+). Lys-124 is modified (N6-carboxylysine). Cys-197 is a [2Fe-2S] cluster binding site. Position 494 (Glu-494) interacts with Mg(2+). The active-site Proton acceptor is the Ser-520.

This sequence belongs to the IlvD/Edd family. Homodimer. [2Fe-2S] cluster is required as a cofactor. The cofactor is Mg(2+).

The catalysed reaction is (2R)-2,3-dihydroxy-3-methylbutanoate = 3-methyl-2-oxobutanoate + H2O. The enzyme catalyses (2R,3R)-2,3-dihydroxy-3-methylpentanoate = (S)-3-methyl-2-oxopentanoate + H2O. Its pathway is amino-acid biosynthesis; L-isoleucine biosynthesis; L-isoleucine from 2-oxobutanoate: step 3/4. The protein operates within amino-acid biosynthesis; L-valine biosynthesis; L-valine from pyruvate: step 3/4. In terms of biological role, functions in the biosynthesis of branched-chain amino acids. Catalyzes the dehydration of (2R,3R)-2,3-dihydroxy-3-methylpentanoate (2,3-dihydroxy-3-methylvalerate) into 2-oxo-3-methylpentanoate (2-oxo-3-methylvalerate) and of (2R)-2,3-dihydroxy-3-methylbutanoate (2,3-dihydroxyisovalerate) into 2-oxo-3-methylbutanoate (2-oxoisovalerate), the penultimate precursor to L-isoleucine and L-valine, respectively. This Frankia casuarinae (strain DSM 45818 / CECT 9043 / HFP020203 / CcI3) protein is Dihydroxy-acid dehydratase.